The chain runs to 85 residues: Large ribosomal subunit protein bL31 (85 aa).

The tract at residues 64–85 (KYGMSESQGAGGKGNAKKKDEK) is disordered.

Belongs to the bacterial ribosomal protein bL31 family. Type A subfamily. Part of the 50S ribosomal subunit.

Binds the 23S rRNA. This is Large ribosomal subunit protein bL31 from Acaryochloris marina (strain MBIC 11017).